Here is a 421-residue protein sequence, read N- to C-terminus: GTPase Obg (421 aa).

Positions 4–161 (LHFIDEAFNE…FKIKIQLKVL (158 aa)) constitute an Obg domain. The OBG-type G domain occupies 162-327 (ADVGLLGFPS…LKYAIKNLLQ (166 aa)). GTP-binding positions include 168-175 (GFPSVGKS), 193-197 (FTTLF), 214-217 (DLPG), 281-284 (NKMD), and 308-310 (SLI). Mg(2+) contacts are provided by serine 175 and threonine 195. Residues 343–421 (DLNSETQTFT…ICNYLFDFVI (79 aa)) enclose the OCT domain.

This sequence belongs to the TRAFAC class OBG-HflX-like GTPase superfamily. OBG GTPase family. As to quaternary structure, monomer. It depends on Mg(2+) as a cofactor.

The protein localises to the cytoplasm. An essential GTPase which binds GTP, GDP and possibly (p)ppGpp with moderate affinity, with high nucleotide exchange rates and a fairly low GTP hydrolysis rate. Plays a role in control of the cell cycle, stress response, ribosome biogenesis and in those bacteria that undergo differentiation, in morphogenesis control. The chain is GTPase Obg from Phytoplasma australiense.